Here is a 227-residue protein sequence, read N- to C-terminus: UPF0659 protein YMR090W (227 aa).

It belongs to the UPF0659 family.

It is found in the cytoplasm. The chain is UPF0659 protein YMR090W from Saccharomyces cerevisiae (strain ATCC 204508 / S288c) (Baker's yeast).